The chain runs to 282 residues: Putative 4-diphosphocytidyl-2-C-methyl-D-erythritol kinase (282 aa).

K9 is a catalytic residue. Position 93 to 103 (93 to 103 (PVSAGLAGGSA)) interacts with ATP. D135 is a catalytic residue.

The protein belongs to the GHMP kinase family. IspE subfamily.

It carries out the reaction 4-CDP-2-C-methyl-D-erythritol + ATP = 4-CDP-2-C-methyl-D-erythritol 2-phosphate + ADP + H(+). Catalyzes the phosphorylation of the position 2 hydroxy group of 4-diphosphocytidyl-2C-methyl-D-erythritol. The polypeptide is Putative 4-diphosphocytidyl-2-C-methyl-D-erythritol kinase (Staphylococcus aureus (strain bovine RF122 / ET3-1)).